The following is a 304-amino-acid chain: uncharacterized protein (304 aa).

Residues 136–137 (GI), 215–217 (VGR), and Asp-241 each bind NAD(+). Arg-217 is a catalytic residue. The active site involves Glu-246. His-265 functions as the Proton donor in the catalytic mechanism. 265–268 (HTAN) is a binding site for NAD(+).

It belongs to the D-isomer specific 2-hydroxyacid dehydrogenase family.

This is an uncharacterized protein from Corynebacterium melassecola.